The chain runs to 418 residues: ADP-ribose glycohydrolase MACROD2 (418 aa).

A Macro domain is found at 57–238 (PEEIQVKNSL…IYKRKLNEFF (182 aa)). Residues 75–77 (GDI), 88–90 (AAN), 95–100 (GGGGVD), 183–189 (ISTGIYG), and Phe222 each bind substrate. The disordered stretch occupies residues 238-418 (FPKDGGDDEE…KDTNDDANEA (181 aa)). The span at 250-262 (KGDSDEMKEDTEG) shows a compositional bias: basic and acidic residues. Positions 295 to 318 (TGNTQDMTAMSLETNEGNDVSSPA) are enriched in polar residues. Over residues 321 to 360 (PLKEGEELSEAKITGEKISVEPKTPEPEDAKMTVEEKSQE) the composition is skewed to basic and acidic residues. Over residues 377–389 (ETEDLDGDSEEPS) the composition is skewed to acidic residues.

This sequence belongs to the MacroD-type family. MacroD1/2-like subfamily.

The protein resides in the nucleus. The catalysed reaction is 2''-O-acetyl-ADP-D-ribose + H2O = ADP-D-ribose + acetate + H(+). The enzyme catalyses 4-O-(ADP-D-ribosyl)-L-aspartyl-[protein] + H2O = L-aspartyl-[protein] + ADP-D-ribose + H(+). It carries out the reaction 5-O-(ADP-D-ribosyl)-L-glutamyl-[protein] + H2O = L-glutamyl-[protein] + ADP-D-ribose + H(+). It catalyses the reaction alpha-NAD(+) + H2O = ADP-D-ribose + nicotinamide + H(+). Subject to product inhibition by ADP-ribose. Removes ADP-ribose from aspartate and glutamate residues in proteins bearing a single ADP-ribose moiety. Inactive towards proteins bearing poly-ADP-ribose. Deacetylates O-acetyl-ADP ribose, a signaling molecule generated by the deacetylation of acetylated lysine residues in histones and other proteins. This is ADP-ribose glycohydrolase MACROD2 from Xenopus laevis (African clawed frog).